The sequence spans 372 residues: Alpha-parvin (372 aa).

Residues 1–11 (MATSPQKSPSV) show a composition bias toward low complexity. A disordered region spans residues 1–45 (MATSPQKSPSVPKSPTPKSPPSRKKDDSFLGKLGGTLARRKKAKE). N-acetylalanine is present on Ala2. A phosphoserine mark is found at Ser8, Ser14, and Ser19. The segment at 21 to 25 (PSRKK) is interaction with ARHGAP31. A phosphoserine mark is found at Ser28 and Ser62. Calponin-homology (CH) domains are found at residues 95–202 (QELM…QYFR) and 262–369 (NVVK…TKYR). A required for interaction with TESK1 and ILK region spans residues 223–372 (GILQSRQIQE…NLFTKYRNVE (150 aa)).

The protein belongs to the parvin family. Component of the heterotrimeric IPP (ILK-PINCH-PARVIN) complex composed of ILK, LIMS1/PINCH and PARVA; the complex binds to F-actin via the C-terminal tail of LIMS1 and the N-terminal region of PARVA, promoting F-actin filament bundling. Formation of the IPP complex is dependent on protein kinase C and precedes integrin-mediated cell adhesion and spreading. Interacts with TGFB1I1. Interacts with ARHGAP31. Interacts with the actin cytoskeleton. Interacts (via C-terminus) with TESK1 (via C-terminus); the interaction inhibits TESK1 kinase activity. Interacts with PXN/PAXILLIN (via LD motif 4). As to expression, widely expressed, with highest levels in heart, skeletal muscle, kidney and liver.

The protein localises to the cell junction. The protein resides in the focal adhesion. It localises to the cell membrane. Its subcellular location is the cytoplasm. It is found in the cytoskeleton. The protein localises to the myofibril. The protein resides in the sarcomere. It localises to the z line. Plays a role in sarcomere organization and in smooth muscle cell contraction. Required for normal development of the embryonic cardiovascular system, and for normal septation of the heart outflow tract. Plays a role in sprouting angiogenesis and is required for normal adhesion of vascular smooth muscle cells to endothelial cells during blood vessel development. Plays a role in the reorganization of the actin cytoskeleton, formation of lamellipodia and ciliogenesis. Plays a role in the establishment of cell polarity, cell adhesion, cell spreading, and directed cell migration. Within the IPP (ILK-PINCH-PARVIN) complex, binds to F-actin, promoting F-actin bundling, a process required to generate force for actin cytoskeleton reorganization and subsequent dynamic cell adhesion events such as cell spreading and migration. This Homo sapiens (Human) protein is Alpha-parvin (PARVA).